Reading from the N-terminus, the 107-residue chain is Nucleoid-associated protein Hhal_0231 (107 aa).

Disordered regions lie at residues 1-24 (MKGGLGNIMKQAQKMQEDMQKAQE) and 82-107 (VQRESQERMSGMAEGMGLPPGMKLPF). Residues 15-24 (MQEDMQKAQE) show a composition bias toward basic and acidic residues.

It belongs to the YbaB/EbfC family. In terms of assembly, homodimer.

The protein localises to the cytoplasm. It is found in the nucleoid. Binds to DNA and alters its conformation. May be involved in regulation of gene expression, nucleoid organization and DNA protection. The sequence is that of Nucleoid-associated protein Hhal_0231 from Halorhodospira halophila (strain DSM 244 / SL1) (Ectothiorhodospira halophila (strain DSM 244 / SL1)).